Reading from the N-terminus, the 442-residue chain is tRNA modification GTPase MnmE (442 aa).

3 residues coordinate (6S)-5-formyl-5,6,7,8-tetrahydrofolate: Arg23, Glu82, and Lys121. The region spanning 217–363 (PFKIAIIGET…LVDLLTKYIN (147 aa)) is the TrmE-type G domain. Asn227 contacts K(+). Residues 227 to 232 (NVGKSS), 246 to 252 (SNIKGST), and 271 to 274 (DTAG) each bind GTP. Ser231 provides a ligand contact to Mg(2+). Ser246, Ile248, and Ser251 together coordinate K(+). Thr252 is a Mg(2+) binding site. A (6S)-5-formyl-5,6,7,8-tetrahydrofolate-binding site is contributed by Lys442.

The protein belongs to the TRAFAC class TrmE-Era-EngA-EngB-Septin-like GTPase superfamily. TrmE GTPase family. As to quaternary structure, homodimer. Heterotetramer of two MnmE and two MnmG subunits. It depends on K(+) as a cofactor.

Its subcellular location is the cytoplasm. In terms of biological role, exhibits a very high intrinsic GTPase hydrolysis rate. Involved in the addition of a carboxymethylaminomethyl (cmnm) group at the wobble position (U34) of certain tRNAs, forming tRNA-cmnm(5)s(2)U34. The protein is tRNA modification GTPase MnmE of Mycoplasma genitalium (strain ATCC 33530 / DSM 19775 / NCTC 10195 / G37) (Mycoplasmoides genitalium).